The sequence spans 216 residues: GTP:AMP phosphotransferase, mitochondrial (216 aa).

15-20 is a GTP binding site; that stretch reads GSGKGT. The NMPbind stretch occupies residues 35-64; sequence STGDILRQNIIKNTELGKKAKQYIAEGKLV. Residues Thr-36, Arg-41, 62-64, 89-92, and Gln-96 contribute to the AMP site; these read KLV and GFPR. The segment at 125 to 162 is LID; the sequence is NRWIHAPSGRVYNIGFKNPKVPGKDDVTGEPLMQREDD. Residues Arg-126 and 135–136 contribute to the GTP site; that span reads VY. The AMP site is built by Arg-159 and Arg-170. Position 199 (Thr-199) interacts with GTP.

The protein belongs to the adenylate kinase family. AK3 subfamily. Monomer. Ubiquitously expressed with highest levels expressed in the abdomen, suggesting a function in muscle tissues.

The protein localises to the mitochondrion matrix. It catalyses the reaction a ribonucleoside 5'-triphosphate + AMP = a ribonucleoside 5'-diphosphate + ADP. Its function is as follows. Involved in maintaining the homeostasis of cellular nucleotides by catalyzing the interconversion of nucleoside phosphates. Has GTP:AMP phosphotransferase and ITP:AMP phosphotransferase activities. The chain is GTP:AMP phosphotransferase, mitochondrial from Drosophila melanogaster (Fruit fly).